Reading from the N-terminus, the 995-residue chain is MTRDEDNGFSEWGGYFEAKKSKLEEQFAAASDPFRKSDLFQGISIFVNGRTDPSADELKRIMMVHGGTFHHYERSHTTYIIASVLPDVKVRNMNLSKFISAKWVVDCLEKKKIVDYKPYLLYTNQKTSQPMLIFGKPKDNGANESKSDVEPPKDKAEVEVDSTKDETQMELGGILKNLQQAVATSPEKEASASESKITNLSTTSNNSTTARTAADPNFLSEFYKNSRLHHIATLGAGFKQYVCRLRQKHGTQGFPKRETLKSLANSHHNCLERYVMHIDMDCFFVSVGLRTRPELRGLPIAVTHSKGGNAATDVPVHPQADRKAELELFAQRFEHHFHDGDKAEKVRSGFDKKMSLSEIASCSYEAREKGIRNGMFVGQALKLCPELKTIPYDFEGYKEVAFTLYDTVAQYTLNIEAVSCDEMFVELTDLAHELNVDVMAFVSHLRQEVYSKTGCPCSAGVAGNKLLARMATKEAKPNGQFLLDSSNDILAYMAPMSLDLLPGVGSSISHKLKQAGLNNCGDVQNTTLEKMEKVLGKKLGQNLFQNCRGIDDRPLAYEQIRKTVSAEMNFGIRFTNSVECEQFLCQLSEEVTKRLVEIRRKARSINLKIMVRAAEAPVETSKYMGHGVCDIINKSSLIKYATDDVNVITTVVLDLMKDADIPPDELRGLGIHLTRLEDANEVRKENNIKEMFGKMSEMRKDKPIPQGAVGDKSIGDDKVNKPLVFENKPKPREPRNVLSMLTAAAVSRKSVTEDRSQRGTSKPITRPLSLVPKLDEDVLAQLPEDIRLEVIANREEHLCIAEYDGYRSPQYPTLRSPPLLNPYVTTNVSPLKATDLKPSTSRAAVARLQKRKERKEQEHYIRSDQIVADYIDDLPDFVNPHILKLISHPVEMPELLMGDNYKDLLNDWVSREEVPKPNDVDLILKQVSRMIKNDQLDHVCDVMKYWCRIINMKRSSSCCWHVAYKHIEESIQNQMLTIEGYSLLFIEYIRCIKCS.

A BRCT domain is found at 35–121; the sequence is RKSDLFQGIS…KIVDYKPYLL (87 aa). Disordered regions lie at residues 135-164 and 182-211; these read GKPK…DSTK and VATS…TTAR. Over residues 136-164 the composition is skewed to basic and acidic residues; the sequence is KPKDNGANESKSDVEPPKDKAEVEVDSTK. Residues 192 to 211 are compositionally biased toward low complexity; that stretch reads ASESKITNLSTTSNNSTTAR. Residues 275–505 enclose the UmuC domain; that stretch reads VMHIDMDCFF…MSLDLLPGVG (231 aa). Aspartate 279 serves as a coordination point for Mg(2+). DCTP contacts are provided by residues 361–367, asparagine 373, and aspartate 421; that span reads SCSYEAR. Aspartate 421 is a binding site for Mg(2+). Glutamate 422 is an active-site residue. The tract at residues 696-868 is interaction with PolI; it reads SEMRKDKPIP…HYIRSDQIVA (173 aa). An interaction with PolH/DNApol-eta region spans residues 878 to 995; sequence VNPHILKLIS…IEYIRCIKCS (118 aa).

It belongs to the DNA polymerase type-Y family. As to quaternary structure, interacts (via C-terminus) with PolH/DNApol-eta (via C-terminal regions). Interacts (via C-terminus) with PolI. Requires Mg(2+) as cofactor.

It is found in the nucleus. Deoxycytidyl transferase involved in DNA repair. Transfers a dCMP residue from dCTP to the 3'-end of a DNA primer in a template-dependent reaction. May assist in the first step in the bypass of abasic lesions by the insertion of a nucleotide opposite the lesion. Required for normal induction of mutations by physical and chemical agents. During homologous recombination (HR) repair of DNA double-strand breaks (DSBs) regulates the extent of repair synthesis. Possibly recruits the DNA polymerase zeta complex or another translesion polymerase to early DSB repair intermediates to initiate repair synthesis, while also blocking the access of more processive polymerases preventing them from acting during the initial stages of HR repair. In Drosophila melanogaster (Fruit fly), this protein is DNA repair protein Rev1.